Reading from the N-terminus, the 447-residue chain is Serine/threonine-protein phosphatase 2A 55 kDa regulatory subunit B alpha isoform (447 aa).

An N-acetylalanine modification is found at Ala-2. WD repeat units lie at residues 11–80 (QWCF…FQSH), 94–174 (EKIN…IFAN), 175–218 (AHTY…VDIK), 227–270 (EVIT…KLFE), 288–325 (ISDVKFSHSGRYMMTRDYLSVKVWDLNMENRPVETYQV), 347–381 (ECCWNGSDSVVMTGSYNNFFRMFDRNTKRDITLEA), and 414–446 (DFNKKILHTAWHPKENIIAVATTNNLYIFQDKV).

The protein belongs to the phosphatase 2A regulatory subunit B family. As to quaternary structure, PP2A consists of a common heterodimeric core enzyme, composed of a 36 kDa catalytic subunit (subunit C) and a 65 kDa constant regulatory subunit (PR65 or subunit A), that associates with a variety of regulatory subunits. Proteins that associate with the core dimer include three families of regulatory subunits B (the R2/B/PR55/B55, R3/B''/PR72/PR130/PR59 and R5/B'/B56 families), the 48 kDa variable regulatory subunit, viral proteins, and cell signaling molecules. Interacts with the PP2A C catalytic subunit PPP2CA. Interacts with the PP2A A subunit PPP2R1A. Found in a complex with at least ARL2, PPP2CB, PPP2R1A, PPP2R2A, PPP2R5E and TBCD. Interacts with MFHAS1; the interaction is direct. Interacts with PABIR1/FAM122A (via its N-terminus); the interaction is direct and inhibits PP2A activity. Interacts with ARPP19; the interaction is direct and inhibits PP2A activity. Interacts with CRTC3. Brain.

In terms of biological role, substrate-recognition subunit of protein phosphatase 2A (PP2A) that plays a key role in cell cycle by controlling mitosis entry and exit. Involved in chromosome clustering during late mitosis by mediating dephosphorylation of MKI67. Essential for serine/threonine-protein phosphatase 2A-mediated dephosphorylation of WEE1, preventing its ubiquitin-mediated proteolysis, increasing WEE1 protein levels, and promoting the G2/M checkpoint. The chain is Serine/threonine-protein phosphatase 2A 55 kDa regulatory subunit B alpha isoform (Ppp2r2a) from Rattus norvegicus (Rat).